We begin with the raw amino-acid sequence, 199 residues long: Acireductone dioxygenase 1 (199 aa).

Residues His99, His101, Glu105, and His144 each coordinate Fe(2+). Positions 99, 101, 105, and 144 each coordinate Ni(2+).

The protein belongs to the acireductone dioxygenase (ARD) family. Requires Fe(2+) as cofactor. It depends on Ni(2+) as a cofactor.

It is found in the cytoplasm. The protein localises to the nucleus. It catalyses the reaction 1,2-dihydroxy-5-(methylsulfanyl)pent-1-en-3-one + O2 = 4-methylsulfanyl-2-oxobutanoate + formate + 2 H(+). The catalysed reaction is 1,2-dihydroxy-5-(methylsulfanyl)pent-1-en-3-one + O2 = 3-(methylsulfanyl)propanoate + CO + formate + 2 H(+). The protein operates within amino-acid biosynthesis; L-methionine biosynthesis via salvage pathway; L-methionine from S-methyl-5-thio-alpha-D-ribose 1-phosphate: step 5/6. Functionally, catalyzes 2 different reactions between oxygen and the acireductone 1,2-dihydroxy-3-keto-5-methylthiopentene (DHK-MTPene) depending upon the metal bound in the active site. Fe-containing acireductone dioxygenase (Fe-ARD) produces formate and 2-keto-4-methylthiobutyrate (KMTB), the alpha-ketoacid precursor of methionine in the methionine recycle pathway. Ni-containing acireductone dioxygenase (Ni-ARD) produces methylthiopropionate, carbon monoxide and formate, and does not lie on the methionine recycle pathway. The protein is Acireductone dioxygenase 1 (ARD1) of Oryza sativa subsp. indica (Rice).